A 245-amino-acid polypeptide reads, in one-letter code: Uridylate kinase (245 aa).

ATP is bound at residue 16 to 19 (KLSG). The involved in allosteric activation by GTP stretch occupies residues 24 to 29 (GDNGFG). Residue glycine 59 coordinates UMP. ATP is bound by residues glycine 60 and arginine 64. UMP contacts are provided by residues aspartate 78 and 139-146 (NGAPFFTT). ATP-binding residues include asparagine 167, tyrosine 173, and aspartate 176.

The protein belongs to the UMP kinase family. In terms of assembly, homohexamer.

The protein localises to the cytoplasm. It catalyses the reaction UMP + ATP = UDP + ADP. The protein operates within pyrimidine metabolism; CTP biosynthesis via de novo pathway; UDP from UMP (UMPK route): step 1/1. With respect to regulation, allosterically activated by GTP. Inhibited by UTP. Catalyzes the reversible phosphorylation of UMP to UDP. This Deinococcus radiodurans (strain ATCC 13939 / DSM 20539 / JCM 16871 / CCUG 27074 / LMG 4051 / NBRC 15346 / NCIMB 9279 / VKM B-1422 / R1) protein is Uridylate kinase.